The sequence spans 147 residues: Large ribosomal subunit protein uL15 (147 aa).

The segment at Met1–Pro57 is disordered. Basic residues predominate over residues Pro10–Gly21. The segment covering Arg22–Gln36 has biased composition (gly residues). Residues Lys37–Arg46 show a composition bias toward basic residues.

This sequence belongs to the universal ribosomal protein uL15 family. As to quaternary structure, part of the 50S ribosomal subunit.

Functionally, binds to the 23S rRNA. The sequence is that of Large ribosomal subunit protein uL15 from Mycoplasmoides gallisepticum (strain R(low / passage 15 / clone 2)) (Mycoplasma gallisepticum).